A 657-amino-acid chain; its full sequence is Pyoverdine export ATP-binding/permease protein PvdT (657 aa).

One can recognise an ABC transporter domain in the interval 6 to 245 (IDLQDIRKSY…ASTNPGALQA (240 aa)). 43-50 (GASGSGKS) is a binding site for ATP. 4 consecutive transmembrane segments (helical) span residues 285–305 (ALTL…LAVG), 539–559 (IAAI…LMTV), 590–610 (LSVV…GVLI), and 620–640 (LVAI…FGFM).

This sequence belongs to the ABC transporter superfamily. Macrolide exporter (TC 3.A.1.122) family. Part of the tripartite efflux system PvdRT-OpmQ, which is composed of an inner membrane component with both ATPase and permease domains, PvdT, a periplasmic membrane fusion protein, PvdR, and an outer membrane component, OpmQ.

The protein resides in the cell inner membrane. In terms of biological role, part of the tripartite efflux system PvdRT-OpmQ required for the secretion into the extracellular milieu of the siderophore pyoverdine (PVD), which is involved in iron acquisition. This subunit binds PVD and drives its secretion by hydrolyzing ATP. The system is responsible for export of newly synthesized PVD after the final steps of biosynthesis have taken place in the periplasm. It is also responsible for recycling of PVD after internalization of ferri-PVD into the periplasm by the outer-membrane receptor FpvA and release of iron from PVD, thus making PVD available for new cycles of iron uptake. This Pseudomonas fluorescens (strain Pf0-1) protein is Pyoverdine export ATP-binding/permease protein PvdT.